The chain runs to 300 residues: Ribosomal protein L11 methyltransferase (300 aa).

Threonine 152, glycine 173, aspartate 195, and asparagine 234 together coordinate S-adenosyl-L-methionine.

This sequence belongs to the methyltransferase superfamily. PrmA family.

The protein localises to the cytoplasm. The enzyme catalyses L-lysyl-[protein] + 3 S-adenosyl-L-methionine = N(6),N(6),N(6)-trimethyl-L-lysyl-[protein] + 3 S-adenosyl-L-homocysteine + 3 H(+). Its function is as follows. Methylates ribosomal protein L11. The chain is Ribosomal protein L11 methyltransferase from Burkholderia vietnamiensis (strain G4 / LMG 22486) (Burkholderia cepacia (strain R1808)).